The sequence spans 430 residues: Enolase (430 aa).

Gln-164 provides a ligand contact to (2R)-2-phosphoglycerate. The active-site Proton donor is Glu-206. Residues Asp-243, Glu-288, and Asp-315 each coordinate Mg(2+). 4 residues coordinate (2R)-2-phosphoglycerate: Lys-340, Arg-369, Ser-370, and Lys-391. Residue Lys-340 is the Proton acceptor of the active site.

This sequence belongs to the enolase family. Mg(2+) is required as a cofactor.

It localises to the cytoplasm. It is found in the secreted. The protein localises to the cell surface. The enzyme catalyses (2R)-2-phosphoglycerate = phosphoenolpyruvate + H2O. It participates in carbohydrate degradation; glycolysis; pyruvate from D-glyceraldehyde 3-phosphate: step 4/5. Functionally, catalyzes the reversible conversion of 2-phosphoglycerate (2-PG) into phosphoenolpyruvate (PEP). It is essential for the degradation of carbohydrates via glycolysis. The sequence is that of Enolase from Lysinibacillus sphaericus (strain C3-41).